Consider the following 237-residue polypeptide: Proteasome subunit alpha (237 aa).

It belongs to the peptidase T1A family. The 20S proteasome core is composed of 14 alpha and 14 beta subunits that assemble into four stacked heptameric rings, resulting in a barrel-shaped structure. The two inner rings, each composed of seven catalytic beta subunits, are sandwiched by two outer rings, each composed of seven alpha subunits. The catalytic chamber with the active sites is on the inside of the barrel. Has a gated structure, the ends of the cylinder being occluded by the N-termini of the alpha-subunits. Is capped by the proteasome-associated ATPase, ARC.

It localises to the cytoplasm. The protein operates within protein degradation; proteasomal Pup-dependent pathway. With respect to regulation, the formation of the proteasomal ATPase ARC-20S proteasome complex, likely via the docking of the C-termini of ARC into the intersubunit pockets in the alpha-rings, may trigger opening of the gate for substrate entry. Interconversion between the open-gate and close-gate conformations leads to a dynamic regulation of the 20S proteasome proteolysis activity. Its function is as follows. Component of the proteasome core, a large protease complex with broad specificity involved in protein degradation. This is Proteasome subunit alpha from Kineococcus radiotolerans (strain ATCC BAA-149 / DSM 14245 / SRS30216).